The sequence spans 357 residues: F-box only protein 25 (357 aa).

The interaction with beta-actin stretch occupies residues 1–83 (MPFLGQDWRS…DTAAHSFYRE (83 aa)). Positions 224 to 271 (GLTLSDLPLHMLNNILYRFSDGWDIVTLGQVTPTLYMLSEDRRLWKRL) constitute an F-box domain.

In terms of assembly, part of a SCF (SKP1-cullin-F-box) protein ligase complex consisting of FBXO25, SKP1, CUL1 and RBX1. Interacts directly with SKP1 and CUL1. Interacts (via C-terminus) with actin (via N-terminus).

Its subcellular location is the nucleus. Its pathway is protein modification; protein ubiquitination. Its function is as follows. Substrate-recognition component of the SCF (SKP1-CUL1-F-box protein)-type E3 ubiquitin ligase complex. May play a role in accumulation of expanded polyglutamine (polyQ) protein huntingtin (HTT). This chain is F-box only protein 25 (Fbxo25), found in Rattus norvegicus (Rat).